Consider the following 440-residue polypeptide: Thymidine phosphorylase (440 aa).

Belongs to the thymidine/pyrimidine-nucleoside phosphorylase family. As to quaternary structure, homodimer.

It catalyses the reaction thymidine + phosphate = 2-deoxy-alpha-D-ribose 1-phosphate + thymine. It participates in pyrimidine metabolism; dTMP biosynthesis via salvage pathway; dTMP from thymine: step 1/2. Its function is as follows. The enzymes which catalyze the reversible phosphorolysis of pyrimidine nucleosides are involved in the degradation of these compounds and in their utilization as carbon and energy sources, or in the rescue of pyrimidine bases for nucleotide synthesis. The sequence is that of Thymidine phosphorylase from Salmonella heidelberg (strain SL476).